The primary structure comprises 127 residues: S1-like domain-containing protein C146.08c (127 aa).

In terms of domain architecture, S1-like spans Ser10–Val86. The segment at Glu107 to Asp127 is disordered. Residues Asp113–Asp127 show a composition bias toward acidic residues. At Tyr124 the chain carries Phosphotyrosine. At Ser126 the chain carries Phosphoserine.

It belongs to the EIF1AD family.

It is found in the cytoplasm. The protein localises to the nucleus. The polypeptide is S1-like domain-containing protein C146.08c (Schizosaccharomyces pombe (strain 972 / ATCC 24843) (Fission yeast)).